A 388-amino-acid polypeptide reads, in one-letter code: Peptide chain release factor subunit 1 (388 aa).

This sequence belongs to the eukaryotic release factor 1 family. As to quaternary structure, heterodimer of two subunits, one of which binds GTP.

The protein localises to the cytoplasm. Its function is as follows. Directs the termination of nascent peptide synthesis (translation) in response to the termination codons UAA, UAG and UGA. This is Peptide chain release factor subunit 1 (prf1) from Pyrobaculum aerophilum (strain ATCC 51768 / DSM 7523 / JCM 9630 / CIP 104966 / NBRC 100827 / IM2).